Here is a 313-residue protein sequence, read N- to C-terminus: tRNA dimethylallyltransferase (313 aa).

10–17 serves as a coordination point for ATP; that stretch reads GPTAVGKS. 12–17 serves as a coordination point for substrate; it reads TAVGKS. Residues 35-38 are interaction with substrate tRNA; that stretch reads DSTQ.

Belongs to the IPP transferase family. Monomer. The cofactor is Mg(2+).

The catalysed reaction is adenosine(37) in tRNA + dimethylallyl diphosphate = N(6)-dimethylallyladenosine(37) in tRNA + diphosphate. Its function is as follows. Catalyzes the transfer of a dimethylallyl group onto the adenine at position 37 in tRNAs that read codons beginning with uridine, leading to the formation of N6-(dimethylallyl)adenosine (i(6)A). The chain is tRNA dimethylallyltransferase from Oceanobacillus iheyensis (strain DSM 14371 / CIP 107618 / JCM 11309 / KCTC 3954 / HTE831).